The following is a 304-amino-acid chain: Glycine--tRNA ligase alpha subunit (304 aa).

Belongs to the class-II aminoacyl-tRNA synthetase family. In terms of assembly, tetramer of two alpha and two beta subunits.

The protein resides in the cytoplasm. The enzyme catalyses tRNA(Gly) + glycine + ATP = glycyl-tRNA(Gly) + AMP + diphosphate. The sequence is that of Glycine--tRNA ligase alpha subunit from Pectobacterium atrosepticum (strain SCRI 1043 / ATCC BAA-672) (Erwinia carotovora subsp. atroseptica).